A 450-amino-acid chain; its full sequence is Bifunctional protein GlmU (450 aa).

The segment at 1-226 (MLAVAVLAAG…PDEVNGINNR (226 aa)) is pyrophosphorylase. Residues 7–10 (LAAG), Lys-21, Gln-73, and 78–79 (GT) contribute to the UDP-N-acetyl-alpha-D-glucosamine site. Asp-103 contributes to the Mg(2+) binding site. The UDP-N-acetyl-alpha-D-glucosamine site is built by Gly-140, Glu-155, Asn-170, and Asn-224. Asn-224 is a binding site for Mg(2+). A linker region spans residues 227 to 247 (KQLAQCEGVLQQRLRDYWMDE). The segment at 248–450 (GVTFVDPASC…TKDNWANRSI (203 aa)) is N-acetyltransferase. UDP-N-acetyl-alpha-D-glucosamine is bound by residues Arg-329 and Lys-347. The active-site Proton acceptor is His-359. Tyr-362 and Asn-373 together coordinate UDP-N-acetyl-alpha-D-glucosamine. Residues Ala-376, 382–383 (NY), Ala-419, and Arg-436 each bind acetyl-CoA.

The protein in the N-terminal section; belongs to the N-acetylglucosamine-1-phosphate uridyltransferase family. In the C-terminal section; belongs to the transferase hexapeptide repeat family. In terms of assembly, homotrimer. Requires Mg(2+) as cofactor.

Its subcellular location is the cytoplasm. It carries out the reaction alpha-D-glucosamine 1-phosphate + acetyl-CoA = N-acetyl-alpha-D-glucosamine 1-phosphate + CoA + H(+). The enzyme catalyses N-acetyl-alpha-D-glucosamine 1-phosphate + UTP + H(+) = UDP-N-acetyl-alpha-D-glucosamine + diphosphate. It functions in the pathway nucleotide-sugar biosynthesis; UDP-N-acetyl-alpha-D-glucosamine biosynthesis; N-acetyl-alpha-D-glucosamine 1-phosphate from alpha-D-glucosamine 6-phosphate (route II): step 2/2. The protein operates within nucleotide-sugar biosynthesis; UDP-N-acetyl-alpha-D-glucosamine biosynthesis; UDP-N-acetyl-alpha-D-glucosamine from N-acetyl-alpha-D-glucosamine 1-phosphate: step 1/1. It participates in bacterial outer membrane biogenesis; LPS lipid A biosynthesis. In terms of biological role, catalyzes the last two sequential reactions in the de novo biosynthetic pathway for UDP-N-acetylglucosamine (UDP-GlcNAc). The C-terminal domain catalyzes the transfer of acetyl group from acetyl coenzyme A to glucosamine-1-phosphate (GlcN-1-P) to produce N-acetylglucosamine-1-phosphate (GlcNAc-1-P), which is converted into UDP-GlcNAc by the transfer of uridine 5-monophosphate (from uridine 5-triphosphate), a reaction catalyzed by the N-terminal domain. The sequence is that of Bifunctional protein GlmU from Synechococcus sp. (strain CC9902).